The chain runs to 511 residues: Glucans biosynthesis protein G (511 aa).

The N-terminal stretch at M1 to A22 is a signal peptide.

It belongs to the OpgD/OpgG family.

It localises to the periplasm. Its pathway is glycan metabolism; osmoregulated periplasmic glucan (OPG) biosynthesis. Functionally, involved in the biosynthesis of osmoregulated periplasmic glucans (OPGs). The chain is Glucans biosynthesis protein G from Shigella boydii serotype 4 (strain Sb227).